The chain runs to 203 residues: Ras-like protein 1 (203 aa).

17–24 (GGGGVGKS) is a GTP binding site. The short motif at 39-47 (YDPTIEDSY) is the Effector region element. GTP is bound by residues 64–68 (DTAGQ) and 123–126 (NKCD). Cys-200 bears the Cysteine methyl ester mark. A lipid anchor (S-farnesyl cysteine) is attached at Cys-200. The propeptide at 201–203 (ILM) is removed in mature form.

Belongs to the small GTPase superfamily. Ras family.

Its subcellular location is the cell membrane. It catalyses the reaction GTP + H2O = GDP + phosphate + H(+). Its activity is regulated as follows. Alternates between an inactive form bound to GDP and an active form bound to GTP. Activated by a guanine nucleotide-exchange factor (GEF) and inactivated by a GTPase-activating protein (GAP). This chain is Ras-like protein 1 (RAS1), found in Mucor circinelloides f. lusitanicus (Mucor racemosus var. lusitanicus).